A 156-amino-acid polypeptide reads, in one-letter code: Small ribosomal subunit protein uS7 (156 aa).

Belongs to the universal ribosomal protein uS7 family. In terms of assembly, part of the 30S ribosomal subunit. Contacts proteins S9 and S11.

In terms of biological role, one of the primary rRNA binding proteins, it binds directly to 16S rRNA where it nucleates assembly of the head domain of the 30S subunit. Is located at the subunit interface close to the decoding center, probably blocks exit of the E-site tRNA. The protein is Small ribosomal subunit protein uS7 of Burkholderia ambifaria (strain MC40-6).